Consider the following 383-residue polypeptide: Dephospho-CoA kinase (383 aa).

Positions 3-201 (RIGLTGGMGA…RRLVPFERNL (199 aa)) constitute a DPCK domain. Residue 11 to 16 (GAGKST) participates in ATP binding. Residues 196–383 (PFERNLRAAT…EVAERLLGTV (188 aa)) are UPF0157.

In the N-terminal section; belongs to the CoaE family. The protein in the C-terminal section; belongs to the UPF0157 (GrpB) family.

The protein localises to the cytoplasm. It carries out the reaction 3'-dephospho-CoA + ATP = ADP + CoA + H(+). It functions in the pathway cofactor biosynthesis; coenzyme A biosynthesis; CoA from (R)-pantothenate: step 5/5. Functionally, catalyzes the phosphorylation of the 3'-hydroxyl group of dephosphocoenzyme A to form coenzyme A. The sequence is that of Dephospho-CoA kinase from Nocardia farcinica (strain IFM 10152).